A 513-amino-acid polypeptide reads, in one-letter code: Light-independent protochlorophyllide reductase subunit B (513 aa).

Aspartate 36 lines the [4Fe-4S] cluster pocket. Residue aspartate 299 is the Proton donor of the active site. 434-435 provides a ligand contact to substrate; the sequence is GM.

Belongs to the ChlB/BchB/BchZ family. In terms of assembly, protochlorophyllide reductase is composed of three subunits; ChlL, ChlN and ChlB. Forms a heterotetramer of two ChlB and two ChlN subunits. [4Fe-4S] cluster is required as a cofactor.

It localises to the plastid. The protein resides in the chloroplast. It catalyses the reaction chlorophyllide a + oxidized 2[4Fe-4S]-[ferredoxin] + 2 ADP + 2 phosphate = protochlorophyllide a + reduced 2[4Fe-4S]-[ferredoxin] + 2 ATP + 2 H2O. It participates in porphyrin-containing compound metabolism; chlorophyll biosynthesis (light-independent). Functionally, component of the dark-operative protochlorophyllide reductase (DPOR) that uses Mg-ATP and reduced ferredoxin to reduce ring D of protochlorophyllide (Pchlide) to form chlorophyllide a (Chlide). This reaction is light-independent. The NB-protein (ChlN-ChlB) is the catalytic component of the complex. This Anthoceros angustus (Hornwort) protein is Light-independent protochlorophyllide reductase subunit B.